We begin with the raw amino-acid sequence, 600 residues long: Prostaglandin G/H synthase 1 (600 aa).

A signal peptide spans M1–S24. In terms of domain architecture, EGF-like spans P32–T70. Cystine bridges form between C36/C47, C37/C159, C41/C57, and C59/C69. A glycan (N-linked (GlcNAc...) asparagine) is linked at N68. Transmembrane regions (helical) follow at residues I74–L82, P86–L92, R97–A105, and I108–N122. A glycan (N-linked (GlcNAc...) asparagine) is linked at N144. The active-site Proton acceptor is the H207. Y385 serves as the catalytic For cyclooxygenase activity. H388 lines the heme b pocket. N-linked (GlcNAc...) asparagine glycosylation occurs at N410. A disulfide bridge connects residues C569 and C575.

It belongs to the prostaglandin G/H synthase family. In terms of assembly, homodimer. Requires heme b as cofactor.

It localises to the endoplasmic reticulum membrane. Its subcellular location is the microsome membrane. It carries out the reaction (5Z,8Z,11Z,14Z)-eicosatetraenoate + AH2 + 2 O2 = prostaglandin H2 + A + H2O. It catalyses the reaction (5Z,8Z,11Z,14Z)-eicosatetraenoate + 2 O2 = prostaglandin G2. The catalysed reaction is prostaglandin G2 + AH2 = prostaglandin H2 + A + H2O. The enzyme catalyses (9Z,12Z)-octadecadienoate + AH2 + O2 = (9R)-hydroxy-(10E,12Z)-octadecadienoate + A + H2O. It carries out the reaction (9Z,12Z)-octadecadienoate + AH2 + O2 = (9S)-hydroxy-(10E,12Z)-octadecadienoate + A + H2O. It catalyses the reaction (9Z,12Z)-octadecadienoate + AH2 + O2 = (13S)-hydroxy-(9Z,11E)-octadecadienoate + A + H2O. The catalysed reaction is (9Z,12Z)-octadecadienoate + AH2 + O2 = (13R)-hydroxy-(9Z,11E)-octadecadienoate + A + H2O. It functions in the pathway lipid metabolism; prostaglandin biosynthesis. The cyclooxygenase activity is inhibited by nonsteroidal anti-inflammatory drugs (NSAIDs) including ibuprofen, flurbiprofen, ketoprofen, naproxen, flurbiprofen, anirolac, fenclofenac and diclofenac. Functionally, dual cyclooxygenase and peroxidase that plays an important role in the biosynthesis pathway of prostanoids, a class of C20 oxylipins mainly derived from arachidonate ((5Z,8Z,11Z,14Z)-eicosatetraenoate, AA, C20:4(n-6)), with a particular role in the inflammatory response. The cyclooxygenase activity oxygenates AA to the hydroperoxy endoperoxide prostaglandin G2 (PGG2), and the peroxidase activity reduces PGG2 to the hydroxy endoperoxide prostaglandin H2 (PGH2), the precursor of all 2-series prostaglandins and thromboxanes. This complex transformation is initiated by abstraction of hydrogen at carbon 13 (with S-stereochemistry), followed by insertion of molecular O2 to form the endoperoxide bridge between carbon 9 and 11 that defines prostaglandins. The insertion of a second molecule of O2 (bis-oxygenase activity) yields a hydroperoxy group in PGG2 that is then reduced to PGH2 by two electrons. Involved in the constitutive production of prostanoids in particular in the stomach and platelets. In gastric epithelial cells, it is a key step in the generation of prostaglandins, such as prostaglandin E2 (PGE2), which plays an important role in cytoprotection. In platelets, it is involved in the generation of thromboxane A2 (TXA2), which promotes platelet activation and aggregation, vasoconstriction and proliferation of vascular smooth muscle cells. Can also use linoleate (LA, (9Z,12Z)-octadecadienoate, C18:2(n-6)) as substrate and produce hydroxyoctadecadienoates (HODEs) in a regio- and stereospecific manner, being (9R)-HODE ((9R)-hydroxy-(10E,12Z)-octadecadienoate) and (13S)-HODE ((13S)-hydroxy-(9Z,11E)-octadecadienoate) its major products. The protein is Prostaglandin G/H synthase 1 (PTGS1) of Ovis aries (Sheep).